The sequence spans 483 residues: Probable apyrase 3 (483 aa).

Topologically, residues 1–29 are cytoplasmic; it reads MTPETDALKVQILPKHQSLPYTVTKAKSK. Residues 30 to 50 form a helical; Signal-anchor for type II membrane protein membrane-spanning segment; the sequence is SLILLVVVSVTITLGLLLYVF. Residues 51 to 483 lie on the Extracellular side of the membrane; that stretch reads NSNSVISSGS…NGKSRKYLGF (433 aa). 72-82 is a binding site for ATP; sequence VLIDAGSSGTR. Glu-195 functions as the Proton acceptor in the catalytic mechanism. ATP is bound at residue 219 to 229; the sequence is GIVELGGASAQ. Residues Asn-250, Asn-281, Asn-305, and Asn-326 are each glycosylated (N-linked (GlcNAc...) asparagine).

It belongs to the GDA1/CD39 NTPase family. It depends on Ca(2+) as a cofactor. As to expression, expressed in the initiation zone of lateral root and in the lateral root tip, the adaxial junction of lateral shoots with the stems, and in the abscission zone of flower organs. Not expressed in the rosette leaves.

The protein resides in the membrane. The catalysed reaction is a ribonucleoside 5'-triphosphate + 2 H2O = a ribonucleoside 5'-phosphate + 2 phosphate + 2 H(+). Catalyzes the hydrolysis of phosphoanhydride bonds of nucleoside tri- and di-phosphates. The protein is Probable apyrase 3 (APY3) of Arabidopsis thaliana (Mouse-ear cress).